The sequence spans 294 residues: 4-hydroxy-tetrahydrodipicolinate synthase (294 aa).

Thr47 lines the pyruvate pocket. Tyr136 acts as the Proton donor/acceptor in catalysis. Lys164 functions as the Schiff-base intermediate with substrate in the catalytic mechanism. Val206 serves as a coordination point for pyruvate.

It belongs to the DapA family. Homotetramer; dimer of dimers.

The protein localises to the cytoplasm. The enzyme catalyses L-aspartate 4-semialdehyde + pyruvate = (2S,4S)-4-hydroxy-2,3,4,5-tetrahydrodipicolinate + H2O + H(+). It functions in the pathway amino-acid biosynthesis; L-lysine biosynthesis via DAP pathway; (S)-tetrahydrodipicolinate from L-aspartate: step 3/4. Catalyzes the condensation of (S)-aspartate-beta-semialdehyde [(S)-ASA] and pyruvate to 4-hydroxy-tetrahydrodipicolinate (HTPA). The protein is 4-hydroxy-tetrahydrodipicolinate synthase of Nostoc punctiforme (strain ATCC 29133 / PCC 73102).